We begin with the raw amino-acid sequence, 80 residues long: Cell division activator CedA (80 aa).

The protein belongs to the CedA family.

In terms of biological role, activates the cell division inhibited by chromosomal DNA over-replication. The sequence is that of Cell division activator CedA from Escherichia coli O1:K1 / APEC.